A 318-amino-acid polypeptide reads, in one-letter code: Ribosomal large subunit pseudouridine synthase B (318 aa).

The S4 RNA-binding domain occupies 3–75 (EKLQKILARA…VCRVLAYYKP (73 aa)). Residue D110 is the Nucleophile of the active site. Positions 271–318 (AVKRHTEVSGRQVAGRQGSARKGSTRQNVGNAAPAATASRRSGPKKRG) are disordered.

Belongs to the pseudouridine synthase RsuA family.

It catalyses the reaction uridine(2605) in 23S rRNA = pseudouridine(2605) in 23S rRNA. In terms of biological role, responsible for synthesis of pseudouridine from uracil-2605 in 23S ribosomal RNA. In Yersinia pestis, this protein is Ribosomal large subunit pseudouridine synthase B (rluB).